Consider the following 63-residue polypeptide: Overexpressed in colon carcinoma 1 protein homolog (63 aa).

The span at 1 to 12 (MGCGNSTAASAG) shows a compositional bias: low complexity. Residues 1–40 (MGCGNSTAASAGAGQGPAGAAKDVTEESITEDDKRRNYGG) form a disordered region.

It belongs to the OCC1 family.

The protein is Overexpressed in colon carcinoma 1 protein homolog of Bos taurus (Bovine).